A 142-amino-acid chain; its full sequence is Neuritin (142 aa).

The first 27 residues, 1–27, serve as a signal peptide directing secretion; the sequence is MGLKLNGRYISLILAVQIAYLVQAVRA. A lipid anchor (GPI-anchor amidated glycine) is attached at glycine 116. A propeptide spans 117–142 (removed in mature form); it reads AAGSLLPALSVLLVSLSAALATWFSF.

The protein belongs to the neuritin family. In terms of assembly, component of the outer core of AMPAR complex. AMPAR complex consists of an inner core made of 4 pore-forming GluA/GRIA proteins (GRIA1, GRIA2, GRIA3 and GRIA4) and 4 major auxiliary subunits arranged in a twofold symmetry. One of the two pairs of distinct binding sites is occupied either by CNIH2, CNIH3 or CACNG2, CACNG3. The other harbors CACNG2, CACNG3, CACNG4, CACNG8 or GSG1L. This inner core of AMPAR complex is complemented by outer core constituents binding directly to the GluA/GRIA proteins at sites distinct from the interaction sites of the inner core constituents. Outer core constituents include at least PRRT1, PRRT2, CKAMP44/SHISA9, FRRS1L and NRN1. The proteins of the inner and outer core serve as a platform for other, more peripherally associated AMPAR constituents. Alone or in combination, these auxiliary subunits control the gating and pharmacology of the AMPAR complex and profoundly impact their biogenesis and protein processing. Expressed in the brain (at protein level).

Its subcellular location is the cell membrane. It is found in the synapse. Promotes neurite outgrowth and especially branching of neuritic processes in primary hippocampal and cortical cells. The protein is Neuritin (Nrn1) of Mus musculus (Mouse).